Here is a 1602-residue protein sequence, read N- to C-terminus: Calmodulin-regulated spectrin-associated protein 1 (1602 aa).

Residues 216-331 enclose the Calponin-homology (CH) domain; it reads ESPAHQKVRY…FIAELFWWFE (116 aa). Serine 217, serine 371, serine 375, serine 416, and serine 431 each carry phosphoserine. Residues 426–471 form a disordered region; sequence QKQQKSIQGEDIPDQRHRSNSLTRVDGQPRGAAIAWPEKKTRPASQ. At threonine 512 the chain carries Phosphothreonine. Residues serine 563, serine 575, and serine 589 each carry the phosphoserine modification. A compositionally biased stretch (basic and acidic residues) spans 603-620; that stretch reads AKEKQVITKEDERGEGRP. The disordered stretch occupies residues 603–637; that stretch reads AKEKQVITKEDERGEGRPRSIVSRRPSEGPQPLVR. Phosphoserine occurs at positions 629, 722, 728, 738, and 740. Basic and acidic residues predominate over residues 772–789; it reads KLQEDMKVKEHEDKDDAS. 2 disordered regions span residues 772–808 and 825–870; these read KLQEDMKVKEHEDKDDASGRSSPCLSTASQMSSVSMA and LNSC…GKDP. Composition is skewed to low complexity over residues 797 to 808 and 830 to 841; these read STASQMSSVSMA and TKSSTSSSQKTT. Residues 857–869 are compositionally biased toward basic and acidic residues; that stretch reads QKREQSPSQHGKD. Positions 871 to 892 are sufficient for interaction with SPTBN1; the sequence is ASLLASELVQLHMQLEEKRRAI. 2 coiled-coil regions span residues 873 to 909 and 1016 to 1048; these read LLASELVQLHMQLEEKRRAIEAQKKKMEALSARQRLK and DVNECDLSIEKLNETISTLQQAILKISQQQEQL. Residues 903-922 are sufficient for interaction with calmodulin; it reads SARQRLKLGKAAFLHVVKKG. 3 disordered regions span residues 1075 to 1165, 1206 to 1226, and 1301 to 1448; these read FVEP…GKCL, KEVGSSSSDVSGKESVPVEEP, and ARVR…DWET. At serine 1080 the chain carries Phosphoserine. Positions 1103-1114 are enriched in basic and acidic residues; sequence RPAELKVPKDRP. Residues 1115–1127 show a composition bias toward polar residues; the sequence is QGSSRSKTPTPSV. Positions 1206–1220 are enriched in low complexity; that stretch reads KEVGSSSSDVSGKES. Residues 1291–1343 are a coiled coil; the sequence is LLKQQRKAEEARVRKQQLEAEVELKRDEARRKAEEDRVRKEEEKARRELIKQE. A compositionally biased stretch (basic and acidic residues) spans 1301–1346; the sequence is ARVRKQQLEAEVELKRDEARRKAEEDRVRKEEEKARRELIKQEYLR. The span at 1361-1372 shows a compositional bias: basic residues; that stretch reads PKSKPKKPRPKS. Polar residues predominate over residues 1380–1392; that stretch reads SDSGTKCSSTPDN. A compositionally biased stretch (low complexity) spans 1393–1410; that stretch reads LSRTQSGSSLSLASAATT. Phosphoserine occurs at positions 1398 and 1427. The 135-residue stretch at 1463-1597 folds into the CKK domain; it reads GPKLFKEPSS…QPKRPAVPKK (135 aa). Tyrosine 1537 is modified (phosphotyrosine).

The protein belongs to the CAMSAP1 family. In terms of assembly, interacts with spectrin via SPTBN1; the interaction is direct. Interacts with calmodulin; calcium-dependent it prevents interaction with spectrin.

It localises to the cytoplasm. The protein resides in the cytoskeleton. Its function is as follows. Key microtubule-organizing protein that specifically binds the minus-end of non-centrosomal microtubules and regulates their dynamics and organization. Specifically recognizes growing microtubule minus-ends and stabilizes microtubules. Acts on free microtubule minus-ends that are not capped by microtubule-nucleating proteins or other factors and protects microtubule minus-ends from depolymerization. In contrast to CAMSAP2 and CAMSAP3, tracks along the growing tips of minus-end microtubules without significantly affecting the polymerization rate: binds at the very tip of the microtubules minus-end and acts as a minus-end tracking protein (-TIP) that dissociates from microtubules after allowing tubulin incorporation. Through interaction with spectrin may regulate neurite outgrowth. The polypeptide is Calmodulin-regulated spectrin-associated protein 1 (CAMSAP1) (Homo sapiens (Human)).